We begin with the raw amino-acid sequence, 365 residues long: Aminomethyltransferase (365 aa).

The protein belongs to the GcvT family. As to quaternary structure, the glycine cleavage system is composed of four proteins: P, T, L and H.

The enzyme catalyses N(6)-[(R)-S(8)-aminomethyldihydrolipoyl]-L-lysyl-[protein] + (6S)-5,6,7,8-tetrahydrofolate = N(6)-[(R)-dihydrolipoyl]-L-lysyl-[protein] + (6R)-5,10-methylene-5,6,7,8-tetrahydrofolate + NH4(+). In terms of biological role, the glycine cleavage system catalyzes the degradation of glycine. This chain is Aminomethyltransferase, found in Natranaerobius thermophilus (strain ATCC BAA-1301 / DSM 18059 / JW/NM-WN-LF).